Reading from the N-terminus, the 320-residue chain is Tyrosine recombinase XerC (320 aa).

The 91-residue stretch at 14-104 folds into the Core-binding (CB) domain; the sequence is ADVREAVASW…SLRSFARHLE (91 aa). The Tyr recombinase domain maps to 125 to 311; the sequence is RLPRPLPVAA…DSARLMSAFE (187 aa). Catalysis depends on residues arginine 170, lysine 195, histidine 263, arginine 266, and histidine 289. The active-site O-(3'-phospho-DNA)-tyrosine intermediate is tyrosine 298.

The protein belongs to the 'phage' integrase family. XerC subfamily. Forms a cyclic heterotetrameric complex composed of two molecules of XerC and two molecules of XerD.

It localises to the cytoplasm. Its function is as follows. Site-specific tyrosine recombinase, which acts by catalyzing the cutting and rejoining of the recombining DNA molecules. The XerC-XerD complex is essential to convert dimers of the bacterial chromosome into monomers to permit their segregation at cell division. It also contributes to the segregational stability of plasmids. The polypeptide is Tyrosine recombinase XerC (Methylobacterium sp. (strain 4-46)).